Consider the following 390-residue polypeptide: Caveolae-associated protein 1 (390 aa).

Met1 carries the post-translational modification N-acetylmethionine. Residues 1-40 (MEDPTLYIVERPLPGYPDAEAPEPSSAGAQAAEEPSGAGS) are disordered. Positions 1-98 (MEDPTLYIVE…IQGELSKLGK (98 aa)) are required for homotrimerization and for interaction with CAVIN2 and CAVIN3. Positions 22 to 40 (PEPSSAGAQAAEEPSGAGS) are enriched in low complexity. Ser36, Ser40, and Ser46 each carry phosphoserine. The tract at residues 52 to 62 (VLVLSLLDKII) is nuclear export signal. Positions 53-75 (LVLSLLDKIIGAVDQIQLTQAQL) are leucine-zipper 1. Residue Lys116 forms a Glycyl lysine isopeptide (Lys-Gly) (interchain with G-Cter in SUMO2) linkage. Ser118 is modified (phosphoserine). A Glycyl lysine isopeptide (Lys-Gly) (interchain with G-Cter in SUMO2) cross-link involves residue Lys122. The interval 136 to 152 (KKLEVNEAELLRRRNFK) is nuclear localization signal. Position 156 is a phosphotyrosine (Tyr156). Lys161 is covalently cross-linked (Glycyl lysine isopeptide (Lys-Gly) (interchain with G-Cter in SUMO1); alternate). Lys161 is covalently cross-linked (Glycyl lysine isopeptide (Lys-Gly) (interchain with G-Cter in SUMO2); alternate). A Glycyl lysine isopeptide (Lys-Gly) (interchain with G-Cter in SUMO2) cross-link involves residue Lys165. The tract at residues 166–186 (LSISKSLKESEALPEKEGEEL) is leucine-zipper 2. Phosphoserine is present on residues Ser167 and Ser169. Residue Lys170 forms a Glycyl lysine isopeptide (Lys-Gly) (interchain with G-Cter in SUMO2) linkage. Phosphoserine is present on residues Ser171 and Ser175. The span at 172–181 (LKESEALPEK) shows a compositional bias: basic and acidic residues. The disordered stretch occupies residues 172-201 (LKESEALPEKEGEELGEGERPEEDAAALEL). Positions 182–201 (EGEELGEGERPEEDAAALEL) are enriched in acidic residues. A coiled-coil region spans residues 199-282 (LELSSDEAVE…RMNKLGTRLV (84 aa)). Residues Ser202 and Ser203 each carry the phosphoserine modification. Residues 233–249 (KKAFSKEKMEKTKVRTR) form a nuclear localization signal region. The interval 257–297 (LKTKENLEKTRHTLEKRMNKLGTRLVPAERREKLKTSRDKL) is leucine-zipper 3. The residue at position 300 (Ser300) is a Phosphoserine. Thr302 bears the Phosphothreonine mark. The residue at position 308 (Tyr308) is a Phosphotyrosine. Lys326 is covalently cross-linked (Glycyl lysine isopeptide (Lys-Gly) (interchain with G-Cter in SUMO2)). Residues 344-366 (VGADDDEGGAERGEAGDLRRGSS) form a disordered region. Positions 352–365 (GAERGEAGDLRRGS) are enriched in basic and acidic residues. Phosphoserine is present on residues Ser365, Ser366, Ser379, Ser387, and Ser389.

It belongs to the CAVIN family. As to quaternary structure, component of the CAVIN complex composed of CAVIN1, CAVIN2, CAVIN3 and CAVIN4. Homotrimer. Interacts with TTF1. Interacts with RNA polymerase I subunit POLR1A/RPA1. Binds the 3' end of pre-rRNA. Interacts with transcription factor ZNF148. Interacts with LIPE in the adipocyte cytoplasm. Interacts with CAV1 and CAVIN3. Interacts with CAVIN2. Interacts with CAVIN4 and CAV3. Phosphorylated. Present in active and inactive forms. Changes in phosphorylation pattern may alter activity. Phosphorylation at Tyr-156 is essential for its functionin the regulation of ribosomal transcriptional activity. Post-translationally, five truncated forms are found in the caveolae. These are thought to be the result of proteolysis and may be phosphorylation-dependent. In terms of processing, monoubiquitinated.

Its subcellular location is the membrane. It localises to the caveola. It is found in the cell membrane. The protein localises to the microsome. The protein resides in the endoplasmic reticulum. Its subcellular location is the cytoplasm. It localises to the cytosol. It is found in the mitochondrion. The protein localises to the nucleus. Plays an important role in caveolae formation and organization. Essential for the formation of caveolae in all tissues. Core component of the CAVIN complex which is essential for recruitment of the complex to the caveolae in presence of calveolin-1 (CAV1). Essential for normal oligomerization of CAV1. Promotes ribosomal transcriptional activity in response to metabolic challenges in the adipocytes and plays an important role in the formation of the ribosomal transcriptional loop. Dissociates transcription complexes paused by DNA-bound TTF1, thereby releasing both RNA polymerase I and pre-RNA from the template. The caveolae biogenesis pathway is required for the secretion of proteins such as GASK1A. This Homo sapiens (Human) protein is Caveolae-associated protein 1.